We begin with the raw amino-acid sequence, 258 residues long: Imidazole glycerol phosphate synthase subunit HisF (258 aa).

Active-site residues include D11 and D130.

Belongs to the HisA/HisF family. As to quaternary structure, heterodimer of HisH and HisF.

Its subcellular location is the cytoplasm. It catalyses the reaction 5-[(5-phospho-1-deoxy-D-ribulos-1-ylimino)methylamino]-1-(5-phospho-beta-D-ribosyl)imidazole-4-carboxamide + L-glutamine = D-erythro-1-(imidazol-4-yl)glycerol 3-phosphate + 5-amino-1-(5-phospho-beta-D-ribosyl)imidazole-4-carboxamide + L-glutamate + H(+). It functions in the pathway amino-acid biosynthesis; L-histidine biosynthesis; L-histidine from 5-phospho-alpha-D-ribose 1-diphosphate: step 5/9. In terms of biological role, IGPS catalyzes the conversion of PRFAR and glutamine to IGP, AICAR and glutamate. The HisF subunit catalyzes the cyclization activity that produces IGP and AICAR from PRFAR using the ammonia provided by the HisH subunit. This Prochlorococcus marinus (strain MIT 9211) protein is Imidazole glycerol phosphate synthase subunit HisF.